Consider the following 389-residue polypeptide: S-adenosylmethionine synthase (389 aa).

H15 serves as a coordination point for ATP. Mg(2+) is bound at residue D17. E43 is a K(+) binding site. L-methionine-binding residues include E56 and Q99. Residues 99 to 109 (QSPDIAQGVNE) form a flexible loop region. ATP is bound by residues 166-168 (DAK), 234-235 (RF), D243, 249-250 (RK), A266, and K270. An L-methionine-binding site is contributed by D243. L-methionine is bound at residue K274.

This sequence belongs to the AdoMet synthase family. As to quaternary structure, homotetramer; dimer of dimers. Mg(2+) is required as a cofactor. It depends on K(+) as a cofactor.

The protein localises to the cytoplasm. It catalyses the reaction L-methionine + ATP + H2O = S-adenosyl-L-methionine + phosphate + diphosphate. It participates in amino-acid biosynthesis; S-adenosyl-L-methionine biosynthesis; S-adenosyl-L-methionine from L-methionine: step 1/1. In terms of biological role, catalyzes the formation of S-adenosylmethionine (AdoMet) from methionine and ATP. The overall synthetic reaction is composed of two sequential steps, AdoMet formation and the subsequent tripolyphosphate hydrolysis which occurs prior to release of AdoMet from the enzyme. This Laribacter hongkongensis (strain HLHK9) protein is S-adenosylmethionine synthase.